The sequence spans 448 residues: Signal recognition particle protein (448 aa).

GTP contacts are provided by residues 101-108 (GLQGSGKT), 182-186 (DSAGR), and 240-243 (SKFD).

This sequence belongs to the GTP-binding SRP family. SRP54 subfamily. Part of the signal recognition particle protein translocation system, which is composed of SRP and FtsY. SRP is a ribonucleoprotein composed of Ffh and a 4.5S RNA molecule.

The protein resides in the cytoplasm. The enzyme catalyses GTP + H2O = GDP + phosphate + H(+). Involved in targeting and insertion of nascent membrane proteins into the cytoplasmic membrane. Binds to the hydrophobic signal sequence of the ribosome-nascent chain (RNC) as it emerges from the ribosomes. The SRP-RNC complex is then targeted to the cytoplasmic membrane where it interacts with the SRP receptor FtsY. Interaction with FtsY leads to the transfer of the RNC complex to the Sec translocase for insertion into the membrane, the hydrolysis of GTP by both Ffh and FtsY, and the dissociation of the SRP-FtsY complex into the individual components. This Helicobacter pylori (strain J99 / ATCC 700824) (Campylobacter pylori J99) protein is Signal recognition particle protein.